Consider the following 61-residue polypeptide: Sperm protamine P1 (61 aa).

Positions 1–61 (MARYRHSRSR…RYSRRRRRRY (61 aa)) are disordered.

This sequence belongs to the protamine P1 family. As to expression, testis.

It is found in the nucleus. It localises to the chromosome. Protamines substitute for histones in the chromatin of sperm during the haploid phase of spermatogenesis. They compact sperm DNA into a highly condensed, stable and inactive complex. The polypeptide is Sperm protamine P1 (PRM1) (Onychogalea fraenata (Bridled nail-tailed wallaby)).